Here is a 259-residue protein sequence, read N- to C-terminus: Imidazole glycerol phosphate synthase subunit HisF (259 aa).

Active-site residues include aspartate 11 and aspartate 130.

This sequence belongs to the HisA/HisF family. As to quaternary structure, heterodimer of HisH and HisF.

The protein resides in the cytoplasm. It catalyses the reaction 5-[(5-phospho-1-deoxy-D-ribulos-1-ylimino)methylamino]-1-(5-phospho-beta-D-ribosyl)imidazole-4-carboxamide + L-glutamine = D-erythro-1-(imidazol-4-yl)glycerol 3-phosphate + 5-amino-1-(5-phospho-beta-D-ribosyl)imidazole-4-carboxamide + L-glutamate + H(+). Its pathway is amino-acid biosynthesis; L-histidine biosynthesis; L-histidine from 5-phospho-alpha-D-ribose 1-diphosphate: step 5/9. IGPS catalyzes the conversion of PRFAR and glutamine to IGP, AICAR and glutamate. The HisF subunit catalyzes the cyclization activity that produces IGP and AICAR from PRFAR using the ammonia provided by the HisH subunit. This chain is Imidazole glycerol phosphate synthase subunit HisF, found in Carboxydothermus hydrogenoformans (strain ATCC BAA-161 / DSM 6008 / Z-2901).